The following is a 242-amino-acid chain: Small ribosomal subunit protein uS2 (242 aa).

The protein belongs to the universal ribosomal protein uS2 family.

The chain is Small ribosomal subunit protein uS2 from Colwellia psychrerythraea (strain 34H / ATCC BAA-681) (Vibrio psychroerythus).